Consider the following 561-residue polypeptide: MMASASLLIGSYLLLLMLLARPLGKGLAHLVADRPLHGFATAERGLWRVSGVENQGMRWQRYLLAILLFNAAGLLLLLLILMNQASLPLNPQQMPNLSWDLALNTAVSFITNTDWQAYAGESTLSYFSQMAGLTVQNFLSAATGIAVAFALMRGFVNREQGELGNAWRDITRITLYVLLPLSLLMALFLVSQGTLQNLHGYLDLTTLEGAKQTLPMGPVASQEAIKMLGTNGGGFFNANSAHPFENPTALSNFVQMLAIFLIPAALCFAFGDVVRDRRQGHALLWSMSLMFVAAVVVVMWAEVKGNPHFLTLGADSAANMEGKETRFGILNSSLFAVITTAASCGAVNAMHDSFTALGGMVPMWLMQIGEVVFGGVGSGLYGMLLFVLLAVFIAGLMIGRSPEYLGKKIDVWEMKMTALAILVTPVLVLLGAALAMMTDAGRSAMLNPGTHGFSEVLYALSSAANNNGSAFAGLNANTPFWNMLLAFCMLVGRFGIIVPVLAIAGSLAMKKVQPAGNGTLPTHGTLFIALLIGTVMLVGALTFIPALALGPVAEHLHMSGH.

A run of 12 helical transmembrane segments spans residues 1-21 (MMASASLLIGSYLLLLMLLAR), 62-82 (YLLAILLFNAAGLLLLLLILM), 132-152 (GLTVQNFLSAATGIAVAFALM), 173-193 (ITLYVLLPLSLLMALFLVSQG), 253-273 (FVQMLAIFLIPAALCFAFGDV), 283-303 (LLWSMSLMFVAAVVVVMWAEV), 327-347 (FGILNSSLFAVITTAASCGAV), 356-376 (ALGGMVPMWLMQIGEVVFGGV), 379-399 (GLYGMLLFVLLAVFIAGLMIG), 416-436 (MTALAILVTPVLVLLGAALAM), 483-503 (MLLAFCMLVGRFGIIVPVLAI), and 526-546 (LFIALLIGTVMLVGALTFIPA).

Belongs to the KdpA family. In terms of assembly, the system is composed of three essential subunits: KdpA, KdpB and KdpC.

It localises to the cell inner membrane. In terms of biological role, part of the high-affinity ATP-driven potassium transport (or Kdp) system, which catalyzes the hydrolysis of ATP coupled with the electrogenic transport of potassium into the cytoplasm. This subunit binds the periplasmic potassium ions and delivers the ions to the membrane domain of KdpB through an intramembrane tunnel. In Erwinia tasmaniensis (strain DSM 17950 / CFBP 7177 / CIP 109463 / NCPPB 4357 / Et1/99), this protein is Potassium-transporting ATPase potassium-binding subunit.